The primary structure comprises 118 residues: MARVKRGVIARRRHKKILKLAKGYYGARSRVFRVAKQAVIKAGQYAYRDRRQRKRQFRALWIARINAGARQNGLSYSRLIAGLKKAAIEIDRKVLADLAVNEKAAFTAIVEKAKASLA.

The protein belongs to the bacterial ribosomal protein bL20 family.

Its function is as follows. Binds directly to 23S ribosomal RNA and is necessary for the in vitro assembly process of the 50S ribosomal subunit. It is not involved in the protein synthesizing functions of that subunit. In Pseudomonas aeruginosa (strain LESB58), this protein is Large ribosomal subunit protein bL20.